We begin with the raw amino-acid sequence, 359 residues long: Heme A synthase (359 aa).

5 helical membrane-spanning segments follow: residues 8-28, 94-114, 124-144, 159-179, and 215-235; these read IMSI…VVGG, LLGR…CYLK, LLLI…MVKS, GHLL…LIII, and IIIF…GLDA. Position 274 (His274) interacts with heme. The next 3 membrane-spanning stretches (helical) occupy residues 276–296, 303–323, and 328–348; these read WFGI…IILN, MGMV…ITLL, and ILAA…FLFI. His334 is a binding site for heme.

This sequence belongs to the COX15/CtaA family. Type 2 subfamily. As to quaternary structure, interacts with CtaB. Requires heme b as cofactor.

The protein localises to the cell membrane. It catalyses the reaction Fe(II)-heme o + 2 A + H2O = Fe(II)-heme a + 2 AH2. It functions in the pathway porphyrin-containing compound metabolism; heme A biosynthesis; heme A from heme O: step 1/1. Catalyzes the conversion of heme O to heme A by two successive hydroxylations of the methyl group at C8. The first hydroxylation forms heme I, the second hydroxylation results in an unstable dihydroxymethyl group, which spontaneously dehydrates, resulting in the formyl group of heme A. The protein is Heme A synthase of Orientia tsutsugamushi (strain Boryong) (Rickettsia tsutsugamushi).